The sequence spans 223 residues: Zinc-finger homeodomain protein 12 (223 aa).

Over residues 1–20 (MSSLSKPNRQFLSPTTNNQD) the composition is skewed to polar residues. The disordered stretch occupies residues 1 to 24 (MSSLSKPNRQFLSPTTNNQDTGRE). Residues 37-88 (YNECLKNHAVSLGGHALDGCGEFTPKSTTILTDPPSLRCDACGCHRNFHRRS) form a ZF-HD dimerization-type; degenerate zinc finger. A DNA-binding region (homeobox; atypical) is located at residues 147-204 (KKHKRTKFTAEQKVKMRGFAERAGWKINGWDEKWVREFCSEVGIERKVLKVWIHNNKY).

Homo- and heterodimer with other ZFHD proteins. Interacts with ZHD11.

It is found in the nucleus. Putative transcription factor. The chain is Zinc-finger homeodomain protein 12 (ZHD12) from Arabidopsis thaliana (Mouse-ear cress).